Reading from the N-terminus, the 326-residue chain is Probable cell division protein WhiA (326 aa).

Positions 275-308 form a DNA-binding region, H-T-H motif; the sequence is SLDELGRLADPPMTKDAIAGRIRRLLAMADKRAL.

The protein belongs to the WhiA family.

Involved in cell division and chromosome segregation. In Paenarthrobacter aurescens (strain TC1), this protein is Probable cell division protein WhiA.